The sequence spans 601 residues: 66 kDa stress protein (601 aa).

WD repeat units lie at residues Glu-56–Lys-95, Val-100–Thr-143, His-145–Ala-184, Glu-187–Ala-226, Ala-233–Phe-272, Gly-318–Ile-357, Ala-435–Gln-478, Gly-483–Glu-522, Tyr-526–Ala-565, and Ala-569–Lys-600.

It belongs to the WD repeat AIP1 family.

Functionally, associated with the process of cyst formation. The sequence is that of 66 kDa stress protein from Physarum polycephalum (Slime mold).